The sequence spans 171 residues: Group 1 truncated hemoglobin LI410 (171 aa).

The N-terminal 23 residues, 1 to 23, are a transit peptide targeting the chloroplast; sequence MMRTVQLRTLRPCIRAQQQPVRA. Heme contacts are provided by tyrosine 63 and histidine 111.

Belongs to the truncated hemoglobin family. Group I subfamily. Requires heme as cofactor.

Its subcellular location is the plastid. The protein resides in the chloroplast. The chain is Group 1 truncated hemoglobin LI410 (LI410) from Chlamydomonas moewusii (Chlamydomonas eugametos).